We begin with the raw amino-acid sequence, 526 residues long: Protein spinster homolog 1 (526 aa).

The tract at residues 1–44 (MTSRRSHGDVTPFLTQADNTEEEGVRDPESQSSDEEEEEGKDHG) is disordered. The next 12 helical transmembrane spans lie at 59-79 (VIIVIILFYINLLNYMDRFTV), 98-118 (GLVQTVFICSYMFLAPVFGYL), 126-146 (LIMCVGISFWSLVTLLSSFVS), 159-179 (LVGVGEASYSTIAPTIIADLF), 187-207 (MLSFFYFATPVGCGLGYIVGS), 218-238 (WALRVTPGLGLLAVLLLIFVA), 272-292 (FILSTFGFTTVAFVTGALALW), 321-341 (MIFGGITCITGILGVLTGVEI), 355-375 (LVCAVGMISSAPFLFLSLAFA), 384-404 (VFIFIGETLLSLNWALVADIL), 419-439 (LQIVVSHLLGDAGSPYLIGVI), and 463-483 (MICAFVGVIGGGFFLTTALFI).

This sequence belongs to the major facilitator superfamily. Spinster (TC 2.A.1.49) family.

The protein resides in the lysosome membrane. The catalysed reaction is a 1-acyl-sn-glycero-3-phosphocholine(out) + H(+)(out) = a 1-acyl-sn-glycero-3-phosphocholine(in) + H(+)(in). It catalyses the reaction a 1-acyl-sn-glycero-3-phosphoethanolamine(out) + H(+)(out) = a 1-acyl-sn-glycero-3-phosphoethanolamine(in) + H(+)(in). The enzyme catalyses a 1-O-(1Z-alkenyl)-sn-glycero-3-phosphocholine(out) + H(+)(out) = a 1-O-(1Z-alkenyl)-sn-glycero-3-phosphocholine(in) + H(+)(in). It carries out the reaction a 1-O-(1Z-alkenyl)-sn-glycero-3-phosphoethanolamine(out) + H(+)(out) = a 1-O-(1Z-alkenyl)-sn-glycero-3-phosphoethanolamine(in) + H(+)(in). Its function is as follows. Mediates the rate-limiting, proton-dependent, lysosomal efflux of lysophospholipids. Selective for zwitterionic headgroups such as lysophosphatidylcholine (LPC) and lysophosphatidylethanolamine (LPE). Essential player in lysosomal homeostasis. The chain is Protein spinster homolog 1 (spns1) from Xenopus laevis (African clawed frog).